The chain runs to 152 residues: Kininogen-1c (152 aa).

The N-terminal stretch at 1 to 23 (MRLWFCLSLFIVLCLEHFPGTLA) is a signal peptide. Over residues 28-44 (VPESEEKTEQFLRDLPK) the composition is skewed to basic and acidic residues. The disordered stretch occupies residues 28–152 (VPESEEKTEQ…RGKFHSQSHV (125 aa)).

This sequence belongs to the bradykinin-related peptide family. In terms of tissue distribution, expressed by the skin glands.

The protein resides in the secreted. Its function is as follows. Potent vasodilator. Binds B1 (BDKRB1) and B2 (BDKRB2) bradykinin receptors. The chain is Kininogen-1c from Bombina maxima (Giant fire-bellied toad).